The sequence spans 456 residues: tRNA modification GTPase MnmE (456 aa).

Residues Arg25, Glu87, and Arg126 each coordinate (6S)-5-formyl-5,6,7,8-tetrahydrofolate. The region spanning 221–377 (GLKVAIVGQP…LENAIIEQVN (157 aa)) is the TrmE-type G domain. Asn231 lines the K(+) pocket. GTP-binding positions include 231-236 (NVGKSS), 250-256 (TDLPGTT), and 275-278 (DTAG). Ser235 contacts Mg(2+). The K(+) site is built by Thr250, Leu252, and Thr255. Mg(2+) is bound at residue Thr256. Lys456 serves as a coordination point for (6S)-5-formyl-5,6,7,8-tetrahydrofolate.

It belongs to the TRAFAC class TrmE-Era-EngA-EngB-Septin-like GTPase superfamily. TrmE GTPase family. In terms of assembly, homodimer. Heterotetramer of two MnmE and two MnmG subunits. The cofactor is K(+).

The protein resides in the cytoplasm. Its function is as follows. Exhibits a very high intrinsic GTPase hydrolysis rate. Involved in the addition of a carboxymethylaminomethyl (cmnm) group at the wobble position (U34) of certain tRNAs, forming tRNA-cmnm(5)s(2)U34. This chain is tRNA modification GTPase MnmE, found in Synechocystis sp. (strain ATCC 27184 / PCC 6803 / Kazusa).